The following is a 55-amino-acid chain: Mannose/glucose-specific lectin alpha chain (55 aa).

It belongs to the leguminous lectin family. In terms of assembly, tetramer of two alpha and two beta chains.

The chain is Mannose/glucose-specific lectin alpha chain from Lathyrus sativus (White vetchling).